The primary structure comprises 191 residues: PBAN-type neuropeptides (191 aa).

An N-terminal signal peptide occupies residues 1–17; sequence MFSPLLFFAVSISCVLA. Leucine amide is present on Leu44. The propeptide occupies 48–91; it reads SLRISTEDNRQAFFKLLEAADALKYYYDRLPYEMQADEPETRVT. Leucine amide is present on residues Leu100, Leu120, Leu156, and Leu166. The propeptide occupies 169-191; it reads ELSYDMLPSKLRLVRSTNRTQST.

It belongs to the pyrokinin family. As to expression, expressed in the subesophageal ganglion.

The protein localises to the secreted. A hormone that controls sex pheromone production in females and pheromone responsiveness in male. This is PBAN-type neuropeptides from Spodoptera littoralis (Egyptian cotton leafworm).